Reading from the N-terminus, the 330-residue chain is D-alanine--D-alanine ligase (330 aa).

The ATP-grasp domain occupies 121–321; the sequence is NHYLKDFGVK…IKDVMTDIIE (201 aa). 149-204 provides a ligand contact to ATP; it reads VTRLGLPIFVKPNDGGSSFGVTKVKEVSAIQPAIAKAFGEGREVILERFIDGTEVT. Mg(2+)-binding residues include Asp275, Glu288, and Asn290.

Belongs to the D-alanine--D-alanine ligase family. Mg(2+) is required as a cofactor. Requires Mn(2+) as cofactor.

It localises to the cytoplasm. The catalysed reaction is 2 D-alanine + ATP = D-alanyl-D-alanine + ADP + phosphate + H(+). The protein operates within cell wall biogenesis; peptidoglycan biosynthesis. Functionally, cell wall formation. The sequence is that of D-alanine--D-alanine ligase from Parabacteroides distasonis (strain ATCC 8503 / DSM 20701 / CIP 104284 / JCM 5825 / NCTC 11152).